The chain runs to 232 residues: MSGDENPASKPTPVQDVQGDGRWMSLHHRFVADSKDKEPEVVFIGDSLVQLMHQCEIWRELFSPLHALNFGIGGDSTQHVLWRLENGELEHIRPKIVVVWVGTNNHGHTAEQVTGGIKAIVQLVNERQPQARVVVLGLLPRGQHPNPLREKNRRVNELVRAALAGHPRAHFLDADPGFVHSDGTISHHDMYDYLHLSRLGYTPVCRALHSLLLRLLTQDQGQGGAPLPEPSP.

S2 bears the N-acetylserine mark. Residue S2 is modified to Phosphoserine. Catalysis depends on residues S47, D192, and H195.

Belongs to the 'GDSL' lipolytic enzyme family. Platelet-activating factor acetylhydrolase IB beta/gamma subunits subfamily. Forms a catalytic dimer which is either homodimer (alpha1/alpha1 homodimer) or heterodimer with PAFAH1B2 (alpha1/alpha2 heterodimer). Component of the cytosolic (PAF-AH (I)) heterotetrameric enzyme, which is composed of PAFAH1B1 (beta), PAFAH1B2 (alpha2) and PAFAH1B3 (alpha1) subunits. The catalytic activity of the enzyme resides in the alpha1 (PAFAH1B3) and alpha2 (PAFAH1B2) subunits, whereas the beta subunit (PAFAH1B1) has regulatory activity. Trimer formation is not essential for the catalytic activity. Interacts with VLDLR; this interaction may modulate the Reelin pathway.

Its subcellular location is the cytoplasm. It carries out the reaction a 1-O-alkyl-2-acetyl-sn-glycero-3-phosphocholine + H2O = a 1-O-alkyl-sn-glycero-3-phosphocholine + acetate + H(+). The enzyme catalyses 1-O-hexadecyl-2-acetyl-sn-glycero-3-phosphocholine + H2O = 1-O-hexadecyl-sn-glycero-3-phosphocholine + acetate + H(+). It catalyses the reaction 1-O-hexadecyl-2-acetyl-sn-glycero-3-phosphate + H2O = 1-O-hexadecyl-sn-glycero-3-phosphate + acetate + H(+). Beta subunit (PAFAH1B1) inhibits the acetylhydrolase activity of the alpha1/alpha1 catalytic homodimer. Its function is as follows. Alpha1 catalytic subunit of the cytosolic type I platelet-activating factor (PAF) acetylhydrolase (PAF-AH (I)) heterotetrameric enzyme that catalyzes the hydrolyze of the acetyl group at the sn-2 position of PAF and its analogs and modulates the action of PAF. The activity and substrate specificity of PAF-AH (I) are affected by its subunit composition. Both alpha1/alpha1 homodimer (PAFAH1B3/PAFAH1B3 homodimer) and alpha1/alpha2 heterodimer(PAFAH1B3/PAFAH1B2 heterodimer) hydrolyze 1-O-alkyl-2-acetyl-sn-glycero-3-phosphoric acid (AAGPA) more efficiently than PAF, but they have little hydrolytic activity towards 1-O-alkyl-2-acetyl-sn-glycero-3-phosphorylethanolamine (AAGPE). Plays an important role during the development of brain. In Bos taurus (Bovine), this protein is Platelet-activating factor acetylhydrolase IB subunit alpha1.